Here is a 437-residue protein sequence, read N- to C-terminus: tRNA-2-methylthio-N(6)-dimethylallyladenosine synthase (437 aa).

Residues 2–117 (KHLYIKTFGC…LPQMIQRALD (116 aa)) enclose the MTTase N-terminal domain. The [4Fe-4S] cluster site is built by Cys11, Cys48, Cys80, Cys154, Cys158, and Cys161. The 233-residue stretch at 140 to 372 (RAQGVVGQVT…QQLLNTQQLQ (233 aa)) folds into the Radical SAM core domain. A TRAM domain is found at 375 to 437 (KARVGRRESV…LPNSLRGRLV (63 aa)).

This sequence belongs to the methylthiotransferase family. MiaB subfamily. Monomer. Requires [4Fe-4S] cluster as cofactor.

It is found in the cytoplasm. It carries out the reaction N(6)-dimethylallyladenosine(37) in tRNA + (sulfur carrier)-SH + AH2 + 2 S-adenosyl-L-methionine = 2-methylsulfanyl-N(6)-dimethylallyladenosine(37) in tRNA + (sulfur carrier)-H + 5'-deoxyadenosine + L-methionine + A + S-adenosyl-L-homocysteine + 2 H(+). In terms of biological role, catalyzes the methylthiolation of N6-(dimethylallyl)adenosine (i(6)A), leading to the formation of 2-methylthio-N6-(dimethylallyl)adenosine (ms(2)i(6)A) at position 37 in tRNAs that read codons beginning with uridine. This is tRNA-2-methylthio-N(6)-dimethylallyladenosine synthase from Magnetococcus marinus (strain ATCC BAA-1437 / JCM 17883 / MC-1).